The primary structure comprises 26 residues: M-poneritoxin-Ng1d (26 aa).

In terms of tissue distribution, expressed by the venom gland.

It localises to the secreted. The protein resides in the target cell membrane. Has a broad spectrum of activity against both Gram-positive and Gram-negative bacteria and S.cerevisiae. Has insecticidal and hemolytic activities. May act by disrupting the integrity of the bacterial cell membrane. This is M-poneritoxin-Ng1d from Neoponera goeldii (Ponerine ant).